The following is a 134-amino-acid chain: Small ribosomal subunit protein bS16 (134 aa).

The tract at residues glutamine 105 to alanine 134 is disordered. A compositionally biased stretch (basic residues) spans alanine 114–lysine 123.

This sequence belongs to the bacterial ribosomal protein bS16 family.

In Chlorobium phaeobacteroides (strain BS1), this protein is Small ribosomal subunit protein bS16.